The primary structure comprises 325 residues: Cytochrome c1, heme protein, mitochondrial (325 aa).

The N-terminal 84 residues, M1 to A84, are a transit peptide targeting the mitochondrion. At S85–R287 the chain is on the mitochondrial intermembrane side. The 102-residue stretch at T108–D209 folds into the Cytochrome c domain. Heme c-binding residues include C121, C124, H125, and M244. The helical transmembrane segment at M288–R308 threads the bilayer. Over H309–K325 the chain is Mitochondrial matrix.

Belongs to the cytochrome c family. Component of the ubiquinol-cytochrome c oxidoreductase (cytochrome b-c1 complex, complex III, CIII), a multisubunit enzyme composed of 11 subunits. The complex is composed of 3 respiratory subunits cytochrome b, cytochrome c1 and Rieske protein UQCRFS1, 2 core protein subunits UQCRC1/QCR1 and UQCRC2/QCR2, and 6 low-molecular weight protein subunits UQCRH/QCR6, UQCRB/QCR7, UQCRQ/QCR8, UQCR10/QCR9, UQCR11/QCR10 and subunit 9, the cleavage product of Rieske protein UQCRFS1. The complex exists as an obligatory dimer and forms supercomplexes (SCs) in the inner mitochondrial membrane with NADH-ubiquinone oxidoreductase (complex I, CI) and cytochrome c oxidase (complex IV, CIV), resulting in different assemblies (supercomplex SCI(1)III(2)IV(1) and megacomplex MCI(2)III(2)IV(2)). Interacts with FLVCR2; this interaction occurs in the absence of heme and is disrupted upon heme binding. The cofactor is heme c.

It is found in the mitochondrion inner membrane. It carries out the reaction a quinol + 2 Fe(III)-[cytochrome c](out) = a quinone + 2 Fe(II)-[cytochrome c](out) + 2 H(+)(out). Component of the ubiquinol-cytochrome c oxidoreductase, a multisubunit transmembrane complex that is part of the mitochondrial electron transport chain which drives oxidative phosphorylation. The respiratory chain contains 3 multisubunit complexes succinate dehydrogenase (complex II, CII), ubiquinol-cytochrome c oxidoreductase (cytochrome b-c1 complex, complex III, CIII) and cytochrome c oxidase (complex IV, CIV), that cooperate to transfer electrons derived from NADH and succinate to molecular oxygen, creating an electrochemical gradient over the inner membrane that drives transmembrane transport and the ATP synthase. The cytochrome b-c1 complex catalyzes electron transfer from ubiquinol to cytochrome c, linking this redox reaction to translocation of protons across the mitochondrial inner membrane, with protons being carried across the membrane as hydrogens on the quinol. In the process called Q cycle, 2 protons are consumed from the matrix, 4 protons are released into the intermembrane space and 2 electrons are passed to cytochrome c. Cytochrome c1 is a catalytic core subunit containing a c-type heme. It transfers electrons from the [2Fe-2S] iron-sulfur cluster of the Rieske protein to cytochrome c. In Mus musculus (Mouse), this protein is Cytochrome c1, heme protein, mitochondrial (Cyc1).